Reading from the N-terminus, the 493-residue chain is ATP-dependent RNA helicase dbp3 (493 aa).

The disordered stretch occupies residues 1–38 (MTKRDYQNDTTAESRPTKKSKGEKKVKETKEKKEKKVK). Basic and acidic residues predominate over residues 23–34 (EKKVKETKEKKE). Positions 97 to 105 (SFKSPTSIQ) match the Q motif motif. Residues 109-285 (WPLLFGGRDV…STFMSSPVTV (177 aa)) enclose the Helicase ATP-binding domain. Residue 122–129 (AETGSGKT) coordinates ATP. The DEAD box motif lies at 232-235 (DEAD). The Helicase C-terminal domain occupies 316–462 (RLVQLLKQHQ…EVPEELLKFG (147 aa)).

It belongs to the DEAD box helicase family. DDX5/DBP2 subfamily.

It is found in the nucleus. Its subcellular location is the nucleolus. It catalyses the reaction ATP + H2O = ADP + phosphate + H(+). Functionally, ATP-dependent RNA helicase required for 60S ribosomal subunit synthesis. Involved in efficient pre-rRNA processing, predominantly at site A3, which is necessary for the normal formation of 25S and 5.8S rRNAs. This chain is ATP-dependent RNA helicase dbp3 (dbp3), found in Aspergillus terreus (strain NIH 2624 / FGSC A1156).